The chain runs to 242 residues: Endothelial protein C receptor (242 aa).

A signal peptide spans 1 to 17; it reads MLTKFLPLLLLLLPGCA. Residues 18–214 are Extracellular-facing; sequence LCNSDGSQSL…GSQTGRSYTS (197 aa). Asn-46, Asn-63, Asn-140, Asn-166, and Asn-176 each carry an N-linked (GlcNAc...) asparagine glycan. Cystine bridges form between Cys-119–Cys-190 and Cys-223–Cys-236. Residues 215–235 form a helical membrane-spanning segment; that stretch reads LVLGILMGCFIIAGVAVGIFM. The Cytoplasmic portion of the chain corresponds to 236-242; that stretch reads CTSGRRC.

Expressed in endothelial cells.

It localises to the membrane. Functionally, binds activated protein C. Enhances protein C activation by the thrombin-thrombomodulin complex; plays a role in the protein C pathway controlling blood coagulation. The polypeptide is Endothelial protein C receptor (Procr) (Mus musculus (Mouse)).